The primary structure comprises 78 residues: Large ribosomal subunit protein bL28 (78 aa).

The protein belongs to the bacterial ribosomal protein bL28 family.

In Tropheryma whipplei (strain TW08/27) (Whipple's bacillus), this protein is Large ribosomal subunit protein bL28.